The chain runs to 562 residues: Acetolactate synthase isozyme 1 large subunit (562 aa).

Thiamine diphosphate is bound at residue Glu-60. Residues Arg-162, His-264–Arg-285, and Asp-307–Asp-326 each bind FAD. Residues Gln-393 to Ala-473 are thiamine pyrophosphate binding. Mg(2+) is bound by residues Asp-444 and Asn-471.

It belongs to the TPP enzyme family. As to quaternary structure, dimer of large and small chains. It depends on Mg(2+) as a cofactor. Requires thiamine diphosphate as cofactor.

The catalysed reaction is 2 pyruvate + H(+) = (2S)-2-acetolactate + CO2. Its pathway is amino-acid biosynthesis; L-isoleucine biosynthesis; L-isoleucine from 2-oxobutanoate: step 1/4. It functions in the pathway amino-acid biosynthesis; L-valine biosynthesis; L-valine from pyruvate: step 1/4. The polypeptide is Acetolactate synthase isozyme 1 large subunit (ilvB) (Escherichia coli (strain K12)).